Here is a 129-residue protein sequence, read N- to C-terminus: Small ribosomal subunit protein uS11 (129 aa).

This sequence belongs to the universal ribosomal protein uS11 family. As to quaternary structure, part of the 30S ribosomal subunit. Interacts with proteins S7 and S18. Binds to IF-3.

Functionally, located on the platform of the 30S subunit, it bridges several disparate RNA helices of the 16S rRNA. Forms part of the Shine-Dalgarno cleft in the 70S ribosome. In Halalkalibacterium halodurans (strain ATCC BAA-125 / DSM 18197 / FERM 7344 / JCM 9153 / C-125) (Bacillus halodurans), this protein is Small ribosomal subunit protein uS11.